We begin with the raw amino-acid sequence, 456 residues long: O-phospho-L-seryl-tRNA:Cys-tRNA synthase 2 (456 aa).

Residues 146–147 (AR), Asn-251, and 274–276 (SGH) each bind pyridoxal 5'-phosphate. Lys-277 carries the post-translational modification N6-(pyridoxal phosphate)lysine.

Belongs to the SepCysS family. In terms of assembly, homodimer. Interacts with SepRS. Pyridoxal 5'-phosphate serves as cofactor.

The enzyme catalyses O-phospho-L-seryl-tRNA(Cys) + hydrogen sulfide + H(+) = L-cysteinyl-tRNA(Cys) + phosphate. In terms of biological role, converts O-phospho-L-seryl-tRNA(Cys) (Sep-tRNA(Cys)) to L-cysteinyl-tRNA(Cys) (Cys-tRNA(Cys)). This Methanospirillum hungatei JF-1 (strain ATCC 27890 / DSM 864 / NBRC 100397 / JF-1) protein is O-phospho-L-seryl-tRNA:Cys-tRNA synthase 2.